Reading from the N-terminus, the 226-residue chain is ATP synthase subunit a (226 aa).

5 helical membrane-spanning segments follow: residues 20-40 (LNWF…WLMP), 74-94 (FVSL…PYIF), 100-120 (LTLT…YGWI), 162-182 (LTAN…TGPM), and 187-207 (IILS…SAVA).

Belongs to the ATPase A chain family. In terms of assembly, F-type ATPases have 2 components, CF(1) - the catalytic core - and CF(0) - the membrane proton channel. CF(1) has five subunits: alpha(3), beta(3), gamma(1), delta(1), epsilon(1). CF(0) has three main subunits: a, b and c.

The protein resides in the mitochondrion inner membrane. Its function is as follows. Mitochondrial membrane ATP synthase (F(1)F(0) ATP synthase or Complex V) produces ATP from ADP in the presence of a proton gradient across the membrane which is generated by electron transport complexes of the respiratory chain. F-type ATPases consist of two structural domains, F(1) - containing the extramembraneous catalytic core and F(0) - containing the membrane proton channel, linked together by a central stalk and a peripheral stalk. During catalysis, ATP synthesis in the catalytic domain of F(1) is coupled via a rotary mechanism of the central stalk subunits to proton translocation. Key component of the proton channel; it may play a direct role in the translocation of protons across the membrane. This Aedes albopictus (Asian tiger mosquito) protein is ATP synthase subunit a (mt:ATPase6).